A 150-amino-acid chain; its full sequence is uncharacterized protein (150 aa).

This is an uncharacterized protein from Mycoplasma genitalium (strain ATCC 33530 / DSM 19775 / NCTC 10195 / G37) (Mycoplasmoides genitalium).